The sequence spans 42 residues: Purine nucleoside phosphorylase DeoD-type (42 aa).

8–9 (SD) is a binding site for a purine D-ribonucleoside. Catalysis depends on Asp9, which acts as the Proton donor.

This sequence belongs to the PNP/UDP phosphorylase family. As to quaternary structure, homohexamer; trimer of homodimers.

It carries out the reaction a purine D-ribonucleoside + phosphate = a purine nucleobase + alpha-D-ribose 1-phosphate. The catalysed reaction is a purine 2'-deoxy-D-ribonucleoside + phosphate = a purine nucleobase + 2-deoxy-alpha-D-ribose 1-phosphate. Its function is as follows. Catalyzes the reversible phosphorolytic breakdown of the N-glycosidic bond in the beta-(deoxy)ribonucleoside molecules, with the formation of the corresponding free purine bases and pentose-1-phosphate. This Mycoplasmoides pirum (Mycoplasma pirum) protein is Purine nucleoside phosphorylase DeoD-type.